The chain runs to 425 residues: Histidine--tRNA ligase (425 aa).

The protein belongs to the class-II aminoacyl-tRNA synthetase family. Homodimer.

Its subcellular location is the cytoplasm. The enzyme catalyses tRNA(His) + L-histidine + ATP = L-histidyl-tRNA(His) + AMP + diphosphate + H(+). In Shewanella sp. (strain ANA-3), this protein is Histidine--tRNA ligase.